Here is a 350-residue protein sequence, read N- to C-terminus: MIKLCTFLSLFLIFFFLNLNAINGSGNTGEVVQGTISVDSISKGMDSDESMLYEKNEYDNYQIPNICFDNTGIHQPRFIEDNKEYLYNKIGEISNSFSTNLNNYTTFMHELYGLYNDHIDVSMDNFRYGYIFMQVNFSKHKNKDSTAKLVVNLYGSVNKTHSAGIELAQGSFEVYLNQCDLAQNKINATITDSIFVMHDNTPAKEDHVTSTHDNTNLKNEDSLNKLNDLTKIHSSLMENNIDNTEHFITVDKISECIFQVNKLEDFLNNCMTLTNNNGPNSNENDDALKKHKSQMQKKIYRETLFSNFKESIVNKDMEGCKKNYTLLMSNSIASKLMSVFVFIAVIIYIL.

The first 24 residues, 1–24 (MIKLCTFLSLFLIFFFLNLNAING), serve as a signal peptide directing secretion. Residues 330 to 350 (NSIASKLMSVFVFIAVIIYIL) traverse the membrane as a helical segment.

In terms of assembly, forms multimers, perhaps with an unknown protein(s).

The protein localises to the membrane. Functionally, involved in ookinete evasion of the mosquito complement-like response, oocyst maturation, sporozoite development and infectivity. This Plasmodium berghei (strain Anka) protein is Ookinete surface protein PIMMS43.